The following is a 340-amino-acid chain: MLPSAVAAHAGAYWDVVASSSLLNFPAAPGFGNLGKSFLIENLLRAGGAPPLGLPPPQHHGSAAALGAGAQVRSLPASPVPLKLCPAAEPVSPGGAPYGTRWAFQVLSPSADGARLPGRAPGDPDCAFQPPAPAPSKPFFLSAPPFYSACCGGSCRRPASPTAFAREESVLPLLTQESTSKVRRGILRRAVFSEDQRKALEKMFQKQKYISKTDRKKLAINLGLKESQVKIWFQNRRMKWRNSKEKEVLSNRCLQEVVLQEDPLSRSALGFPSPCASLWEVSQQHPSPGWRENSPEPSERLIQGSPGAEALPPEAKSLQGALYLCSEEDARDKNALTGTV.

Positions 185–244 (GILRRAVFSEDQRKALEKMFQKQKYISKTDRKKLAINLGLKESQVKIWFQNRRMKWRNSK) form a DNA-binding region, homeobox. The segment at 283-313 (QQHPSPGWRENSPEPSERLIQGSPGAEALPP) is disordered.

This sequence belongs to the H2.0 homeobox family.

It is found in the nucleus. In Bos taurus (Bovine), this protein is Homeobox protein DBX2 (DBX2).